The primary structure comprises 439 residues: GTPase Der (439 aa).

2 consecutive EngA-type G domains span residues 4–169 (AMVA…PEND) and 177–352 (IKIA…EEYN). GTP contacts are provided by residues 10-17 (GRPNVGKS), 57-61 (DTGGL), 120-123 (NKVD), 183-190 (GRPNVGKS), 230-234 (DTAGI), and 295-298 (NKWD). Residues 353 to 437 (KRITTGLLNN…PIVISTKKRG (85 aa)) form the KH-like domain.

The protein belongs to the TRAFAC class TrmE-Era-EngA-EngB-Septin-like GTPase superfamily. EngA (Der) GTPase family. Associates with the 50S ribosomal subunit.

Its function is as follows. GTPase that plays an essential role in the late steps of ribosome biogenesis. The chain is GTPase Der from Caldanaerobacter subterraneus subsp. tengcongensis (strain DSM 15242 / JCM 11007 / NBRC 100824 / MB4) (Thermoanaerobacter tengcongensis).